The sequence spans 464 residues: IAA-amino acid hydrolase ILR1-like 6 (464 aa).

The N-terminal stretch at 1–24 is a signal peptide; it reads MDNLRKLNLLSVSLTIIFVSLTIA. Mn(2+) is bound by residues Cys-175, His-177, Glu-211, His-235, and His-433.

Belongs to the peptidase M20 family.

The catalysed reaction is a jasmonyl-L-amino acid + H2O = a jasmonate + an L-alpha-amino acid. Its function is as follows. Hydrolyzes certain amino acid conjugates of the plant growth regulator indole-3-acetic acid (IAA). Also hydrolyzes amino acid conjugates of jasmonic acid and 12-hydroxy jasmonic acid. This chain is IAA-amino acid hydrolase ILR1-like 6, found in Arabidopsis thaliana (Mouse-ear cress).